A 149-amino-acid polypeptide reads, in one-letter code: Nucleoside diphosphate kinase (149 aa).

Positions 9, 57, 85, 91, 102, and 112 each coordinate ATP. His-115 acts as the Pros-phosphohistidine intermediate in catalysis.

Belongs to the NDK family. As to quaternary structure, homotetramer. Mg(2+) is required as a cofactor.

The protein resides in the cytoplasm. The enzyme catalyses a 2'-deoxyribonucleoside 5'-diphosphate + ATP = a 2'-deoxyribonucleoside 5'-triphosphate + ADP. It carries out the reaction a ribonucleoside 5'-diphosphate + ATP = a ribonucleoside 5'-triphosphate + ADP. Functionally, major role in the synthesis of nucleoside triphosphates other than ATP. The ATP gamma phosphate is transferred to the NDP beta phosphate via a ping-pong mechanism, using a phosphorylated active-site intermediate. In Carboxydothermus hydrogenoformans (strain ATCC BAA-161 / DSM 6008 / Z-2901), this protein is Nucleoside diphosphate kinase.